Here is a 180-residue protein sequence, read N- to C-terminus: MTEPIVVGRIGRPHGVRGDVTIEVRTDLPQRRFALGAVLGREGGGAPLTVAEARWHSGRLLLRFQGVEDRGAAEALRDVLLTIDSAEAGPPVDDDEDAEGEGGDIWWDRDLVGLEAVTTAGATLGRVTDVIHAPAGDLLAVGRPGGGEHLVPFVREIVPTVDPAAGRIVVDPPPGLLDLD.

The PRC barrel domain maps to 103-176 (GDIWWDRDLV…RIVVDPPPGL (74 aa)).

It belongs to the RimM family. As to quaternary structure, binds ribosomal protein uS19.

It localises to the cytoplasm. Its function is as follows. An accessory protein needed during the final step in the assembly of 30S ribosomal subunit, possibly for assembly of the head region. Essential for efficient processing of 16S rRNA. May be needed both before and after RbfA during the maturation of 16S rRNA. It has affinity for free ribosomal 30S subunits but not for 70S ribosomes. In Frankia alni (strain DSM 45986 / CECT 9034 / ACN14a), this protein is Ribosome maturation factor RimM.